Here is a 201-residue protein sequence, read N- to C-terminus: Akirin-2 (201 aa).

A phosphoserine mark is found at S18 and S21. The Nuclear localization signal motif lies at P22 to C27. Position 55 is a phosphoserine (S55). An SYVS motif motif is present at residues S198–S201.

Belongs to the akirin family. As to quaternary structure, homodimer. Interacts with IPO9; the interaction is direct. Associates with 20S and 26S proteasomes. Interacts with SMARCD1; promoting SWI/SNF complex recruitment. Interacts with NFKBIZ. Interacts with YWHAB. Polyubiquitinated. Polyubiquitination is dependent of UBR5 that extends pre-ubiquitinated AKIRIN2. In terms of tissue distribution, highly expressed in testis, cerebrum and cerebellum, and barely detectable in liver, heart, spleen and muscle. Also highly expressed in various tumor cells from hepatoma, glioblastoma and pheochromocytoma.

It localises to the nucleus. Its subcellular location is the cytoplasm. The protein resides in the membrane. Functionally, molecular adapter that acts as a bridge between a variety of multiprotein complexes, and which is involved in embryonic development, immunity, myogenesis and brain development. Plays a key role in nuclear protein degradation by promoting import of proteasomes into the nucleus: directly binds to fully assembled 20S proteasomes at one end and to nuclear import receptor IPO9 at the other end, bridging them together and mediating the import of pre-assembled proteasome complexes through the nuclear pore. Involved in innate immunity by regulating the production of interleukin-6 (IL6) downstream of Toll-like receptor (TLR): acts by bridging the NF-kappa-B inhibitor NFKBIZ and the SWI/SNF complex, leading to promote induction of IL6. Also involved in adaptive immunity by promoting B-cell activation. Involved in brain development: required for the survival and proliferation of cerebral cortical progenitor cells. Involved in myogenesis: required for skeletal muscle formation and skeletal development, possibly by regulating expression of muscle differentiation factors. Also plays a role in facilitating interdigital tissue regression during limb development. The chain is Akirin-2 from Rattus norvegicus (Rat).